The following is a 304-amino-acid chain: Quinolinate synthase (304 aa).

Iminosuccinate-binding residues include His-24 and Ser-41. Cys-86 contacts [4Fe-4S] cluster. Iminosuccinate is bound by residues 112–114 (YVN) and Ser-129. A [4Fe-4S] cluster-binding site is contributed by Cys-171. Residues 197-199 (HPE) and Thr-214 contribute to the iminosuccinate site. Cys-259 provides a ligand contact to [4Fe-4S] cluster.

It belongs to the quinolinate synthase family. Type 2 subfamily. [4Fe-4S] cluster is required as a cofactor.

The protein localises to the cytoplasm. It carries out the reaction iminosuccinate + dihydroxyacetone phosphate = quinolinate + phosphate + 2 H2O + H(+). Its pathway is cofactor biosynthesis; NAD(+) biosynthesis; quinolinate from iminoaspartate: step 1/1. Catalyzes the condensation of iminoaspartate with dihydroxyacetone phosphate to form quinolinate. The chain is Quinolinate synthase from Methanosarcina barkeri (strain Fusaro / DSM 804).